A 4960-amino-acid polypeptide reads, in one-letter code: Malformin synthetase mlfA (4960 aa).

Residues 194–564 (ERHATNRPHS…CGRADTQVKL (371 aa)) form an adenylation 1 region. Residues 705-778 (SRLEQEVQLA…EAASLAEVQE (74 aa)) enclose the Carrier 1 domain. At Ser739 the chain carries O-(pantetheine 4'-phosphoryl)serine. The tract at residues 816–1247 (EDVFPCTTMQ…ALNTLSLLQA (432 aa)) is condensation 1. Residues 1275–1650 (DRWVTRQPEG…GRKDTQVKLR (376 aa)) are adenylation 2. The Carrier 2 domain maps to 1777–1854 (TPASELERTL…HLAAEVGEPA (78 aa)). Disordered stretches follow at residues 1855 to 1883 (GQSA…NDGV) and 1917 to 1943 (GGSS…KKNA). Low complexity-rich tracts occupy residues 1857–1881 (SASS…STND) and 1919–1936 (SSSN…SSSS). A condensation 2 region spans residues 1989–2404 (EDIYPATALQ…AVSCSDKETL (416 aa)). An adenylation 3 region spans residues 2427–2819 (RRTPHAPAVC…IGRRDGQLKL (393 aa)). Positions 2955-3031 (RPVTSQEREM…QLICHINTIR (77 aa)) constitute a Carrier 3 domain. Ser2992 carries the O-(pantetheine 4'-phosphoryl)serine modification. 2 condensation regions span residues 3049–3464 (VALA…FTFP) and 3520–3889 (SGYV…EQLV). Residues 3914-4304 (HNSRQAVCAW…VGRKDNQIKF (391 aa)) form an adenylation 4 region. Residues 4438–4514 (MPSTAAERKM…DLSDQAKSLI (77 aa)) enclose the Carrier 4 domain. O-(pantetheine 4'-phosphoryl)serine is present on Ser4475. The tract at residues 4551–4878 (DVLPTTSFQH…LQTIVQHQNN (328 aa)) is condensation 5.

It belongs to the NRP synthetase family.

It functions in the pathway secondary metabolite biosynthesis. Nonribosomal peptide synthetase; part of the gene cluster that mediates the biosynthesis of malformins, cyclic pentapeptides with a disulfide bond between 2 consecutive cysteins, that show potential anti-tumor as well as antimalarial and antitrypanosomal properties. The nonribosomal peptide synthetase mlfA is responsible of the formation of the cyclic pentapeptide. The malformin biosynthesis clusters in malformin-producing fungi also contain enzymes involved in the formation of the disulfide bond between the two consecutive cysteins within malformins, in addition to additional tailoring enzymes such as methyltransferases or oxidoreductases. They are also composed of up to 4 major facilitator superfamily transporters, and transcription factors probably involved in the regulation of the expression of those clusters. The protein is Malformin synthetase mlfA of Aspergillus neoniger (strain CBS 115656).